The primary structure comprises 317 residues: Beta-ketoacyl-[acyl-carrier-protein] synthase III (317 aa).

Active-site residues include Cys-112 and His-244. The tract at residues 245–249 (QANLR) is ACP-binding. Asn-274 is an active-site residue.

The protein belongs to the thiolase-like superfamily. FabH family. As to quaternary structure, homodimer.

Its subcellular location is the cytoplasm. It carries out the reaction malonyl-[ACP] + acetyl-CoA + H(+) = 3-oxobutanoyl-[ACP] + CO2 + CoA. Its pathway is lipid metabolism; fatty acid biosynthesis. Its function is as follows. Catalyzes the condensation reaction of fatty acid synthesis by the addition to an acyl acceptor of two carbons from malonyl-ACP. Catalyzes the first condensation reaction which initiates fatty acid synthesis and may therefore play a role in governing the total rate of fatty acid production. Possesses both acetoacetyl-ACP synthase and acetyl transacylase activities. Its substrate specificity determines the biosynthesis of branched-chain and/or straight-chain of fatty acids. This Sodalis glossinidius (strain morsitans) protein is Beta-ketoacyl-[acyl-carrier-protein] synthase III.